We begin with the raw amino-acid sequence, 288 residues long: 18S rRNA aminocarboxypropyltransferase (288 aa).

4 residues coordinate S-adenosyl-L-methionine: Ser43, Val91, Leu114, and Trp129. Over residues 209–221 (IWSAGNLNHKPTL) the composition is skewed to polar residues. A disordered region spans residues 209–267 (IWSAGNLNHKPTLNTSSTHSNSEESRSPLHEPSEASLAHDEHSIPTDDNEETLTNLQAN). Residues 229 to 253 (NSEESRSPLHEPSEASLAHDEHSIP) are compositionally biased toward basic and acidic residues.

The protein belongs to the TDD superfamily. TSR3 family.

Its subcellular location is the cytoplasm. It localises to the nucleus. The enzyme catalyses an N(1)-methylpseudouridine in rRNA + S-adenosyl-L-methionine = N(1)-methyl-N(3)-[(3S)-3-amino-3-carboxypropyl]pseudouridine in rRNA + S-methyl-5'-thioadenosine + H(+). The catalysed reaction is N(1)-methylpseudouridine(1191) in yeast 18S rRNA + S-adenosyl-L-methionine = N(1)-methyl-N(3)-[(3S)-3-amino-3-carboxypropyl]pseudouridine(1191) in yeast 18S rRNA + S-methyl-5'-thioadenosine + H(+). In terms of biological role, aminocarboxypropyltransferase that catalyzes the aminocarboxypropyl transfer on pseudouridine at position 1191 (Psi1191) in 18S rRNA. It constitutes the last step in biosynthesis of the hypermodified N1-methyl-N3-(3-amino-3-carboxypropyl) pseudouridine (m1acp3-Psi) conserved in eukaryotic 18S rRNA. Required for processing 35S pre-rRNA at site D. The protein is 18S rRNA aminocarboxypropyltransferase of Schizosaccharomyces pombe (strain 972 / ATCC 24843) (Fission yeast).